The following is a 377-amino-acid chain: Ribosomal RNA large subunit methyltransferase G (377 aa).

It belongs to the methyltransferase superfamily. RlmG family.

The protein resides in the cytoplasm. It catalyses the reaction guanosine(1835) in 23S rRNA + S-adenosyl-L-methionine = N(2)-methylguanosine(1835) in 23S rRNA + S-adenosyl-L-homocysteine + H(+). Functionally, specifically methylates the guanine in position 1835 (m2G1835) of 23S rRNA. In Shewanella sp. (strain ANA-3), this protein is Ribosomal RNA large subunit methyltransferase G.